We begin with the raw amino-acid sequence, 348 residues long: Dihydroorotase (348 aa).

Zn(2+) contacts are provided by His14 and His16. Substrate-binding positions include 16 to 18 (HLR) and Asn42. Lys100, His137, and His175 together coordinate Zn(2+). At Lys100 the chain carries N6-carboxylysine. Residue His137 coordinates substrate. Leu220 serves as a coordination point for substrate. Position 248 (Asp248) interacts with Zn(2+). Asp248 is a catalytic residue. The substrate site is built by His252 and Ala264.

The protein belongs to the metallo-dependent hydrolases superfamily. DHOase family. Class II DHOase subfamily. Homodimer. Zn(2+) serves as cofactor.

The catalysed reaction is (S)-dihydroorotate + H2O = N-carbamoyl-L-aspartate + H(+). Its pathway is pyrimidine metabolism; UMP biosynthesis via de novo pathway; (S)-dihydroorotate from bicarbonate: step 3/3. Its function is as follows. Catalyzes the reversible cyclization of carbamoyl aspartate to dihydroorotate. The chain is Dihydroorotase from Ectopseudomonas mendocina (strain ymp) (Pseudomonas mendocina).